A 151-amino-acid polypeptide reads, in one-letter code: Deazaflavin-dependent nitroreductase (151 aa).

Coenzyme F420-(gamma-Glu)n contacts are provided by residues 54-56, 60-65, 76-79, 87-91, and Tyr-133; these read RKT, RVNPLY, AASK, and MWYLN.

It belongs to the F420H(2)-dependent quinone reductase family.

Its subcellular location is the cell membrane. The catalysed reaction is oxidized coenzyme F420-(gamma-L-Glu)(n) + a quinol + H(+) = reduced coenzyme F420-(gamma-L-Glu)(n) + a quinone. In terms of biological role, involved in a F420-dependent anti-oxidant mechanism that protects M.tuberculosis against oxidative stress and bactericidal agents. Catalyzes the F420H(2)-dependent two-electron reduction of quinones to dihydroquinones, thereby preventing the formation of cytotoxic semiquinones obtained by the one-electron reduction pathway. In vitro, catalyzes the reduction of both benzoquinone and naphthoquinone analogs; since menaquinone is the sole quinone electron carrier in the respiratory chain in M.tuberculosis, the physiological electron acceptor for Fqr-mediated F420H(2) oxidation is therefore likely to be the endogenous menaquinone found in the membrane fraction of M.tuberculosis. Is able to use F420 species with two and five glutamate residues in its polyglutamate tail. Cannot use NADH or NADPH instead of F420H(2) as the electron donor. Functionally, is involved in the bioreductive activation of bicyclic 4-nitroimidazole prodrugs such as PA-824 and delamanid developed for anti-tuberculosis therapy against both replicating and persistent bacteria. It converts PA-824 into three primary metabolites resulting from reduction of the imidazole ring at C-3; the major one is the corresponding des-nitroimidazole that generates lethal reactive nitrogen species, including nitric oxide (NO), which appears to be responsible for the anaerobic killing activity. Ddn uses the reduced F420 produced by FGD1 to activate PA-824. Delamanid (OPC-67683) is also reduced by Ddn to its des-nitro form. The chain is Deazaflavin-dependent nitroreductase (ddn) from Mycobacterium tuberculosis (strain CDC 1551 / Oshkosh).